The following is a 405-amino-acid chain: Tryptophan synthase beta chain (405 aa).

Residue lysine 98 is modified to N6-(pyridoxal phosphate)lysine.

It belongs to the TrpB family. As to quaternary structure, tetramer of two alpha and two beta chains. Requires pyridoxal 5'-phosphate as cofactor.

It carries out the reaction (1S,2R)-1-C-(indol-3-yl)glycerol 3-phosphate + L-serine = D-glyceraldehyde 3-phosphate + L-tryptophan + H2O. It participates in amino-acid biosynthesis; L-tryptophan biosynthesis; L-tryptophan from chorismate: step 5/5. Functionally, the beta subunit is responsible for the synthesis of L-tryptophan from indole and L-serine. This is Tryptophan synthase beta chain from Xanthomonas oryzae pv. oryzae (strain MAFF 311018).